The primary structure comprises 221 residues: Octanoyltransferase (221 aa).

One can recognise a BPL/LPL catalytic domain in the interval 40-218 (PNLEDVLILL…AFAEVFGLEL (179 aa)). Residues 82–89 (RGGEVTYH), 149–151 (AIG), and 162–164 (GFA) each bind substrate. Cys-180 functions as the Acyl-thioester intermediate in the catalytic mechanism.

Belongs to the LipB family.

It localises to the cytoplasm. It catalyses the reaction octanoyl-[ACP] + L-lysyl-[protein] = N(6)-octanoyl-L-lysyl-[protein] + holo-[ACP] + H(+). It participates in protein modification; protein lipoylation via endogenous pathway; protein N(6)-(lipoyl)lysine from octanoyl-[acyl-carrier-protein]: step 1/2. Catalyzes the transfer of endogenously produced octanoic acid from octanoyl-acyl-carrier-protein onto the lipoyl domains of lipoate-dependent enzymes. Lipoyl-ACP can also act as a substrate although octanoyl-ACP is likely to be the physiological substrate. This Nostoc sp. (strain PCC 7120 / SAG 25.82 / UTEX 2576) protein is Octanoyltransferase.